The primary structure comprises 386 residues: Phosphoglycerate kinase (386 aa).

Substrate-binding positions include 21–23 (DLN), arginine 36, 59–62 (HLGR), arginine 113, and arginine 146. Residues lysine 197, glutamate 314, and 340 to 343 (GGDT) each bind ATP.

Belongs to the phosphoglycerate kinase family. As to quaternary structure, monomer.

Its subcellular location is the cytoplasm. The enzyme catalyses (2R)-3-phosphoglycerate + ATP = (2R)-3-phospho-glyceroyl phosphate + ADP. The protein operates within carbohydrate degradation; glycolysis; pyruvate from D-glyceraldehyde 3-phosphate: step 2/5. The chain is Phosphoglycerate kinase from Ectopseudomonas mendocina (strain ymp) (Pseudomonas mendocina).